Consider the following 333-residue polypeptide: L-lactate dehydrogenase (333 aa).

NAD(+)-binding positions include 29 to 57 and arginine 99; that span reads GQVGMACAYSILQQNLANELCLVDVVADK. Arginine 106, asparagine 138, and arginine 169 together coordinate substrate. Asparagine 138 contributes to the NAD(+) binding site. Histidine 193 (proton acceptor) is an active-site residue. Substrate is bound at residue threonine 249.

This sequence belongs to the LDH/MDH superfamily. LDH family. In terms of assembly, homotetramer.

Its subcellular location is the cytoplasm. The catalysed reaction is (S)-lactate + NAD(+) = pyruvate + NADH + H(+). It participates in fermentation; pyruvate fermentation to lactate; (S)-lactate from pyruvate: step 1/1. The chain is L-lactate dehydrogenase (ldh-1) from Caenorhabditis elegans.